A 470-amino-acid polypeptide reads, in one-letter code: Glutamate--tRNA ligase 2 (470 aa).

The 'HIGH' region signature appears at 11-21 (PSPTGHLHLGG). A 'KMSKS' region motif is present at residues 238 to 242 (KLSKR). K241 is an ATP binding site.

The protein belongs to the class-I aminoacyl-tRNA synthetase family. Glutamate--tRNA ligase type 1 subfamily. Monomer.

The protein resides in the cytoplasm. It carries out the reaction tRNA(Glu) + L-glutamate + ATP = L-glutamyl-tRNA(Glu) + AMP + diphosphate. Functionally, catalyzes the attachment of glutamate to tRNA(Glu) in a two-step reaction: glutamate is first activated by ATP to form Glu-AMP and then transferred to the acceptor end of tRNA(Glu). In Ehrlichia ruminantium (strain Gardel), this protein is Glutamate--tRNA ligase 2.